The sequence spans 358 residues: Methionine import ATP-binding protein MetN (358 aa).

The region spanning 2-247 (ITTTGLTKVY…PGSELAHELF (246 aa)) is the ABC transporter domain. Position 38 to 45 (38 to 45 (GQSGAGKS)) interacts with ATP.

Belongs to the ABC transporter superfamily. Methionine importer (TC 3.A.1.24) family. As to quaternary structure, the complex is composed of two ATP-binding proteins (MetN), two transmembrane proteins (MetI) and a solute-binding protein (MetQ).

Its subcellular location is the cell membrane. The enzyme catalyses L-methionine(out) + ATP + H2O = L-methionine(in) + ADP + phosphate + H(+). It carries out the reaction D-methionine(out) + ATP + H2O = D-methionine(in) + ADP + phosphate + H(+). In terms of biological role, part of the ABC transporter complex MetNIQ involved in methionine import. Responsible for energy coupling to the transport system. This chain is Methionine import ATP-binding protein MetN, found in Streptomyces griseus.